Here is a 1199-residue protein sequence, read N- to C-terminus: Putative mitoferrin (1199 aa).

The chain crosses the membrane as a helical span at residues 32 to 52 (VPLWQHIFCGSIAGLMEHVFM). N-linked (GlcNAc...) asparagine glycans are attached at residues Asn-92, Asn-171, Asn-208, Asn-268, Asn-326, Asn-353, Asn-443, Asn-499, Asn-539, Asn-649, Asn-708, Asn-715, and Asn-723. The chain crosses the membrane as a helical span at residues 730-750 (GVNVVVLGCIPAHALYFSTFE). Asn-763 and Asn-772 each carry an N-linked (GlcNAc...) asparagine glycan. The Solcar 1 repeat unit spans residues 792 to 873 (LNYFSIAVSG…ICTNEKMKKI (82 aa)). 2 helical membrane passes run 795-815 (FSIAVSGFLATLVHDLIITPI) and 845-865 (LYLSLPITLLMNIPYQIIMIC). 7 N-linked (GlcNAc...) asparagine glycosylation sites follow: Asn-914, Asn-922, Asn-965, Asn-1013, Asn-1022, Asn-1041, and Asn-1056. Residues 1109-1191 (SYFVCAGIGG…WGTYETMKRF (83 aa)) form a Solcar 2 repeat. Residues 1111–1131 (FVCAGIGGGIAAVLTNPLDVI) traverse the membrane as a helical segment.

This sequence belongs to the mitochondrial carrier (TC 2.A.29) family.

Its subcellular location is the mitochondrion membrane. In terms of biological role, putative iron transporter. The protein is Putative mitoferrin of Plasmodium falciparum (isolate 3D7).